A 63-amino-acid chain; its full sequence is Lysis protein (63 aa).

The helical transmembrane segment at 21 to 43 threads the bilayer; that stretch reads LYVWIALAIVLSDFTSIFSHWIW.

Belongs to the Leviviricetes lysis protein family.

The protein localises to the host cell inner membrane. It is found in the host cell outer membrane. Its function is as follows. Induces the formation of specific membrane adhesion sites between the inner and outer membranes, apparently leading to host cell lysis. Lysis may be performed via activation of host murein hydrolases. The sequence is that of Lysis protein from Escherichia coli (Bacteriophage JP34).